A 450-amino-acid chain; its full sequence is Phosphoglucosamine mutase (450 aa).

The Phosphoserine intermediate role is filled by Ser101. Positions 101, 240, 242, and 244 each coordinate Mg(2+). Ser101 carries the phosphoserine modification.

It belongs to the phosphohexose mutase family. It depends on Mg(2+) as a cofactor. Activated by phosphorylation.

It catalyses the reaction alpha-D-glucosamine 1-phosphate = D-glucosamine 6-phosphate. In terms of biological role, catalyzes the conversion of glucosamine-6-phosphate to glucosamine-1-phosphate. This chain is Phosphoglucosamine mutase, found in Streptococcus sanguinis (strain SK36).